Reading from the N-terminus, the 509-residue chain is Acetyl-coenzyme A carboxylase carboxyl transferase subunit beta, chloroplastic (509 aa).

The tract at residues His-164–Asp-216 is disordered. 2 stretches are compositionally biased toward basic and acidic residues: residues Gly-170–Ser-182 and Thr-193–Asp-216. One can recognise a CoA carboxyltransferase N-terminal domain in the interval Leu-226–Cys-509. Cys-230, Cys-233, Cys-249, and Cys-252 together coordinate Zn(2+). The C4-type zinc finger occupies Cys-230–Cys-252. Residues Phe-288–Thr-307 form a disordered region.

It belongs to the AccD/PCCB family. As to quaternary structure, acetyl-CoA carboxylase is a heterohexamer composed of biotin carboxyl carrier protein, biotin carboxylase and 2 subunits each of ACCase subunit alpha and ACCase plastid-coded subunit beta (accD). It depends on Zn(2+) as a cofactor.

The protein resides in the plastid. The protein localises to the chloroplast stroma. It carries out the reaction N(6)-carboxybiotinyl-L-lysyl-[protein] + acetyl-CoA = N(6)-biotinyl-L-lysyl-[protein] + malonyl-CoA. It functions in the pathway lipid metabolism; malonyl-CoA biosynthesis; malonyl-CoA from acetyl-CoA: step 1/1. Component of the acetyl coenzyme A carboxylase (ACC) complex. Biotin carboxylase (BC) catalyzes the carboxylation of biotin on its carrier protein (BCCP) and then the CO(2) group is transferred by the transcarboxylase to acetyl-CoA to form malonyl-CoA. The protein is Acetyl-coenzyme A carboxylase carboxyl transferase subunit beta, chloroplastic of Ipomoea purpurea (Common morning glory).